We begin with the raw amino-acid sequence, 507 residues long: Arylsulfatase A (507 aa).

Positions 1 to 18 (MGAPRSLLLALAAGLAVA) are cleaved as a signal peptide. Asp29, Asp30, and Cys69 together coordinate Ca(2+). The Nucleophile role is filled by Cys69. 3-oxoalanine (Cys) is present on Cys69. Lys123 contacts substrate. His125 is an active-site residue. Ser150 contributes to the substrate binding site. Cystine bridges form between Cys156/Cys172 and Cys161/Cys168. N-linked (GlcNAc...) asparagine glycosylation occurs at Asn158. A glycan (N-linked (GlcNAc...) asparagine) is linked at Asn184. His229 is a binding site for substrate. Asp281 and Asn282 together coordinate Ca(2+). Disulfide bonds link Cys300/Cys414, Cys488/Cys500, Cys489/Cys502, and Cys493/Cys499. A substrate-binding site is contributed by Lys302. Residue Asn350 is glycosylated (N-linked (GlcNAc...) asparagine).

Belongs to the sulfatase family. Homodimer at neutral pH and homooctamer at acidic pH. Exists both as a single chain of 58 kDa (component A) or as a chain of 50 kDa (component B) linked by disulfide bond(s) to a 7 kDa chain (component C). Interacts with SUMF1. Ca(2+) is required as a cofactor. Post-translationally, the conversion to 3-oxoalanine (also known as C-formylglycine, FGly), of a serine or cysteine residue in prokaryotes and of a cysteine residue in eukaryotes, is critical for catalytic activity. This post-translational modification is severely defective in multiple sulfatase deficiency (MSD).

Its subcellular location is the endoplasmic reticulum. The protein localises to the lysosome. It carries out the reaction an N-acyl-1-beta-D-(3-O-sulfo)-galactosyl-sphing-4-enine + H2O = a beta-D-galactosyl-(1&lt;-&gt;1')-N-acylsphing-4-enine + sulfate + H(+). With respect to regulation, inhibited by phosphate. The phosphate forms a covalent bond with the active site 3-oxoalanine. In terms of biological role, hydrolyzes cerebroside sulfate. The sequence is that of Arylsulfatase A (ARSA) from Homo sapiens (Human).